The sequence spans 333 residues: Starch-binding domain-containing protein 1 (333 aa).

Over 1–6 (MGAVWS) the chain is Extracellular. A helical transmembrane segment spans residues 7–23 (ALLVGGGLAGALILWLL). At 24–333 (RGDSGAPGKD…KVVHGWWGIH (310 aa)) the chain is on the cytoplasmic side. Disordered stretches follow at residues 31 to 73 (GKDG…ELVS) and 106 to 139 (NARE…RVGE). Residues 50–61 (PGGGPGGGGSGG) are compositionally biased toward gly residues. Ser67 carries the phosphoserine modification. Residues 124-134 (NSETSRNQSPE) show a composition bias toward polar residues. Ser135 and Ser162 each carry phosphoserine. Residues 181–187 (HEDWEVV) carry the LIR motif. Residues Ser191, Ser192, Ser201, Ser205, Ser208, Ser216, and Ser219 each carry the phosphoserine modification. In terms of domain architecture, CBM20 spans 233–332 (SVKPRQVSIQ…DKVVHGWWGI (100 aa)).

Interacts with the ATG8 family proteins GABARAP and GABARAPL1. Interacts with several glycogen-associated proteins, such as GYS2 (liver glycogen synthase), GDE (glycogen debranching enzyme), GBE1 (glycogen branching enzyme 1) and EPM2A (Laforin). Post-translationally, ubiquitinated, which leads to proteasomal degradation.

It is found in the preautophagosomal structure membrane. The protein resides in the endoplasmic reticulum membrane. It localises to the cell membrane. The protein localises to the sarcolemma. Its subcellular location is the T-tubule. Acts as a cargo receptor for glycogen. Delivers its cargo to an autophagic pathway called glycophagy, resulting in the transport of glycogen to lysosomes. This is Starch-binding domain-containing protein 1 from Rattus norvegicus (Rat).